The sequence spans 123 residues: Major pollen allergen Ole e 10 (123 aa).

Residues M1 to T21 form the signal peptide. The tract at residues M1–W37 is disordered. C38 and C101 form a disulfide bridge.

In terms of processing, the N-terminus is blocked. Phosphorylated at Ser-24 when expressed as a recombinant protein in a heterologous system. Post-translationally, not glycosylated. In terms of processing, contains two additional disulfide bonds. As to expression, expressed in mature and germinating pollen.

It localises to the cytoplasmic vesicle. Carbohydrate-binding protein binding preferentially 1,3-beta-glucans. May be involved in pollen tube wall re-formation during germination. The chain is Major pollen allergen Ole e 10 from Olea europaea (Common olive).